The following is a 1556-amino-acid chain: MPLLHRKPFVRQKPPADLRPDEEVFYCKVTNEIFRHYDDFFERTILCNSLVWSCAVTGRPGLTYQEALESEKKARQNLQSFPEPLIIPVLYLTSLTHRSRLHEICDDIFAYVKDRYFVEETVEVIRNNGARLQCRILEVLPPSHQNGFANGHVNSVDGETIIISDSDDSETQSCSFQNGKKKDAIDPLLFKYKVQPTKKELHESAIVKATQISRRKHLFSRDKLKLFLKQHCEPQDGVIKIKASSLSTYKIAEQDFSYFFPDDPPTFIFSPANRRRGRPPKRIHISQEDNVANKQTLASYRSKATKERDKLLKQEEMKSLAFEKAKLKREKADALEAKKKEKEDKEKKREELKKIVEEERLKKKEEKERLKVEREKEREKLREEKRKYVEYLKQWSKPREDMECDDLKELPEPTPVKTRLPPEIFGDALMVLEFLNAFGELFDLQDEFPDGVTLEVLEEALVGNDSEGPLCELLFFFLTAIFQAIAEEEEEVAKEQLTDADTKDLTEALDEDADPTKSALSAVASLAAAWPQLHQGCSLKSLDLDSCTLSEILRLHILASGADVTSANAKYRYQKRGGFDATDDACMELRLSNPSLVKKLSSTSVYDLTPGEKMKILHALCGKLLTLVSTRDFIEDYVDILRQAKQEFRELKAEQHRKEREEAAARIRKRKEEKLKEQEQKMKEKQEKLKEDEQRNSTADISIGEEEREDFDTSIESKDTEQKELDQDMVTEDEDDPGSHKRGRRGKRGQNGFKEFTRQEQINCVTREPLTADEEEALKQEHQRKEKELLEKIQSAIACTNIFPLGRDRMYRRYWIFPSIPGLFIEEDYSGLTEDMLLPRPSSFQNNVQSQDPQVSTKTGEPLMSESTSNIDQGPRDHSVQLPKPVHKPNRWCFYSSCEQLDQLIEALNSRGHRESALKETLLQEKSRICAQLARFSEEKFHFSDKPQPDSKPTYSRGRSSNAYDPSQMCAEKQLELRLRDFLLDIEDRIYQGTLGAIKVTDRHIWRSALESGRYELLSEENKENGIIKTVNEDVEEMEIDEQTKVIVKDRLLGIKTETPSTVSTNASTPQSVSSVVHYLAMALFQIEQGIERRFLKAPLDASDSGRSYKTVLDRWRESLLSSASLSQVFLHLSTLDRSVIWSKSILNARCKICRKKGDAENMVLCDGCDRGHHTYCVRPKLKTVPEGDWFCPECRPKQRSRRLSSRQRPSLESDEDVEDSMGGEDDEVDGDEEEGQSEEEEYEVEQDEDDSQEEEEVSLPKRGRPQVRLPVKTRGKLSSSFSSRGQQQEPGRYPSRSQQSTPKTTVSSKTGRSLRKINSAPPTETKSLRIASRSTRHSHGPLQADVFVELLSPRRKRRGRKSANNTPENSPNFPNFRVIATKSSEQSRSVNIASKLSLQESESKRRCRKRQSPEPSPVTLGRRSSGRQGGVHELSAFEQLVVELVRHDDSWPFLKLVSKIQVPDYYDIIKKPIALNIIREKVNKCEYKLASEFIDDIELMFSNCFEYNPRNTSEAKAGTRLQAFFHIQAQKLGLHVTPSNVDQVSTPPAAKKSRI.

Residues 1 to 128 (MPLLHRKPFV…EETVEVIRNN (128 aa)) are required for interaction with the CHRAC1-POLE3 heterodimer. Required for interaction with the CHRAC1-POLE3 heterodimer. A required for interaction with NCOR1 region spans residues 1–133 (MPLLHRKPFV…VIRNNGARLQ (133 aa)). Positions 22–128 (EEVFYCKVTN…EETVEVIRNN (107 aa)) constitute a WAC domain. Residue Ser-270 is modified to Phosphoserine. Positions 306-397 (KERDKLLKQE…YVEYLKQWSK (92 aa)) form a coiled coil. The 66-residue stretch at 422–487 (PEIFGDALMV…LTAIFQAIAE (66 aa)) folds into the DDT domain. Residues 634–709 (IEDYVDILRQ…DISIGEEERE (76 aa)) adopt a coiled-coil conformation. The span at 662-695 (EAAARIRKRKEEKLKEQEQKMKEKQEKLKEDEQR) shows a compositional bias: basic and acidic residues. 3 disordered regions span residues 662-754 (EAAA…NGFK), 841-877 (PSSF…GPRD), and 941-966 (FHFS…AYDP). Residues 667 to 933 (IRKRKEEKLK…QEKSRICAQL (267 aa)) are required for interaction with SMARCA5 and formation of the CHRAC ISWI chromatin remodeling complex. A Phosphoserine modification is found at Ser-702. A compositionally biased stretch (acidic residues) spans 703 to 713 (IGEEEREDFDT). A compositionally biased stretch (basic and acidic residues) spans 715–726 (IESKDTEQKELD). Over residues 727–736 (QDMVTEDEDD) the composition is skewed to acidic residues. The residue at position 731 (Thr-731) is a Phosphothreonine. 2 stretches are compositionally biased toward polar residues: residues 842-872 (SSFQ…SNID) and 951-965 (SKPT…NAYD). A Glycyl lysine isopeptide (Lys-Gly) (interchain with G-Cter in SUMO2) cross-link involves residue Lys-952. Phosphoserine occurs at positions 960 and 961. The PHD-type zinc-finger motif lies at 1148–1198 (NARCKICRKKGDAENMVLCDGCDRGHHTYCVRPKLKTVPEGDWFCPECRPK). 2 disordered regions span residues 1202-1376 (RRLS…NFPN) and 1399-1431 (LQES…RQGG). The segment covering 1213–1258 (ESDEDVEDSMGGEDDEVDGDEEEGQSEEEEYEVEQDEDDSQEEEEV) has biased composition (acidic residues). Residues 1262-1276 (KRGRPQVRLPVKTRG) are compositionally biased toward basic residues. A compositionally biased stretch (polar residues) spans 1277–1312 (KLSSSFSSRGQQQEPGRYPSRSQQSTPKTTVSSKTG). A phosphoserine mark is found at Ser-1281, Ser-1320, Ser-1339, Ser-1353, Ser-1363, Ser-1371, Ser-1402, Ser-1413, and Ser-1417. The segment covering 1363–1374 (SANNTPENSPNF) has biased composition (polar residues). The Bromo domain maps to 1430 to 1533 (GGVHELSAFE…AFFHIQAQKL (104 aa)). The residue at position 1547 (Thr-1547) is a Phosphothreonine.

This sequence belongs to the WAL family. Component of the ACF-1 ISWI chromatin remodeling complex at least composed of SMARCA1 and BAZ1A, which regulates the spacing of histone octamers on the DNA template to facilitate access to DNA. Within the ACF-1 ISWI chromatin remodeling complex interacts with SMARCA1; the interaction is direct. Component of the ACF-5 ISWI chromatin remodeling complex (also called the ACF complex) at least composed of BAZ1A and SMARCA5/SNF2H, which regulates the spacing of histone octamers on the DNA template to facilitate access to DNA. Within the ACF-5 ISWI chromatin remodeling complex interacts with SMARCA5/SNF2H; the interaction is direct. Component of the CHRAC ISWI chromatin remodeling complex at least composed of SMARCA5/SNF2H, BAZ1A/ACF1, CHRAC1 and POLE3; the complex preferentially binds DNA through the CHRAC1-POLE3 heterodimer and possesses ATP-dependent nucleosome-remodeling activity. Within the complex interacts (via N-terminus) with POLE3-CHRAC1 heterodimer; the interaction is direct and is required for the complex to preferentially bind to DNA. Within the complex interacts with SMARCA5/SNF2H; the interaction is direct and promotes the interaction with the POLE3-CHRAC1 heterodimer. Interacts with NCOR1 (via its RD1 domain); the interaction corepresses a number of NCOR1-regulated genes. As to expression, highly expressed in testis and at low or undetectable levels in other tissues analyzed.

The protein localises to the nucleus. Its function is as follows. Regulatory subunit of the ATP-dependent ACF-1 and ACF-5 ISWI chromatin remodeling complexes, which form ordered nucleosome arrays on chromatin and slide edge- and center-positioned histone octamers away from their original location on the DNA template to facilitate access to DNA during DNA-templated processes such as DNA replication, transcription, and repair. Both complexes regulate the spacing of nucleosomes along the chromatin and have the ability to slide mononucleosomes to the center of a DNA template in an ATP-dependent manner. The ACF-1 ISWI chromatin remodeling complex has a lower ATP hydrolysis rate than the ACF-5 ISWI chromatin remodeling complex. Has a role in sensing the length of DNA which flank nucleosomes, which modulates the nucleosome spacing activity of the ACF-5 ISWI chromatin remodeling complex. Involved in DNA replication and together with SMARCA5/SNF2H is required for replication of pericentric heterochromatin in S-phase. May have a role in nuclear receptor-mediated transcription repression. The polypeptide is Bromodomain adjacent to zinc finger domain protein 1A (BAZ1A) (Homo sapiens (Human)).